A 152-amino-acid chain; its full sequence is Protein SprT-like (152 aa).

Residues 7-148 (QRLVEEVSLQ…GKCKGKLILI (142 aa)) enclose the SprT-like domain. H67 is a binding site for Zn(2+). The active site involves E68. Residue H71 participates in Zn(2+) binding.

The protein belongs to the SprT family. Zn(2+) serves as cofactor.

The protein resides in the cytoplasm. This chain is Protein SprT-like, found in Bacillus cereus (strain AH187).